The sequence spans 539 residues: Cytochrome P450 monooxygenase pvhE (539 aa).

Residues 15–31 (VAFCSLVILCILFKVLT) traverse the membrane as a helical segment. N-linked (GlcNAc...) asparagine glycosylation is present at Asn379. Cys473 is a binding site for heme.

Belongs to the cytochrome P450 family. Requires heme as cofactor.

The protein localises to the membrane. It participates in secondary metabolite biosynthesis. Cytochrome P450 monooxygenase; part of the gene cluster that mediates the biosynthesis of varicidin A, an antifungal natural product containing a cis-octahydrodecalin core. The PKS module of pvhA together with the enoylreductase pvhC catalyze the formation of the polyketide unit which is then conjugated to L-isoleucine by the condensation domain of the NRPS module. Activity of the Dieckmann cyclase domain (RED) of pvhA results in release of an acyclic tetramate. The cytochrome P450 monooxygenase pvhE then catalyzes the oxidation of the C21 methyl group to a to carboxylate group. The methyltransferase pvhD then further methylates the pvhE product. The Diels-Alderase pvhB is able to catalyze Diels-Alder cycloaddition using both pvhE and pvhD products as substrates to form the decalin ring, yielding varicidin B and A, respectively. The sequence is that of Cytochrome P450 monooxygenase pvhE from Talaromyces variabilis (Penicillium variabile).